The primary structure comprises 214 residues: MVSANREMAVYCFDTLVSHYNNEETPPPAFEEANHPLFVTWKKIVNGGEPRLRGCIGTLEARRLISGFKDYALTSALRDRRFPPIQAKELPSLQCTVSVLTDYEDAEDYLDWEVGKHGIIIEFTEPETNTKRSATYLPEVPAHEGWTKIEAIDSLVRKAGYNGVITEAVRRRINLTRYQSTLFSMHYSEYLSYVKATRGVVGPVINGINKHAFA.

The region spanning 1 to 194 (MVSANREMAV…MHYSEYLSYV (194 aa)) is the AMMECR1 domain.

This is an uncharacterized protein from Arabidopsis thaliana (Mouse-ear cress).